A 263-amino-acid polypeptide reads, in one-letter code: uncharacterized protein (263 aa).

It belongs to the AtsA family.

It is found in the plastid. The protein localises to the chloroplast. This is an uncharacterized protein from Pyropia yezoensis (Susabi-nori).